The chain runs to 294 residues: Cutinase (294 aa).

The first 33 residues, 1 to 33 (MLRARPSHRLASAAAVVAATGAALLAGSSPAAA), serve as a signal peptide directing secretion. A disulfide bridge connects residues C36 and C107. The active-site Nucleophile is the S118. A disulfide bond links C180 and C187. D184 is a catalytic residue. H198 (proton donor/acceptor) is an active-site residue. The interval 222 to 241 (GTPTTPTPTPTPTPVPTTCV) is disordered. The span at 226-236 (TPTPTPTPTPV) shows a compositional bias: pro residues. The segment at 240 to 294 (CVRDSTRDHVAADRAVSLYGRAYARGSRDSLGATSSYNVVSLQQVEGGWRLVTAC) is may be involved in substrate binding.

It belongs to the cutinase family.

Its subcellular location is the secreted. The enzyme catalyses cutin + H2O = cutin monomers.. It carries out the reaction a tetradecanoate ester + H2O = an aliphatic alcohol + tetradecanoate + H(+). It catalyses the reaction hexadecanoate ester + H2O = an aliphatic alcohol + hexadecanoate + H(+). The catalysed reaction is a butanoate ester + H2O = an aliphatic alcohol + butanoate + H(+). The enzyme catalyses an octanoate ester + H2O = an aliphatic alcohol + octanoate + H(+). Catalyzes the hydrolysis of cutin, a polyester that forms the structure of plant cuticle. Shows esterase activity towards p-nitrophenol-linked aliphatic esters (pNP-aliphatic esters). Can depolymerize synthetic polyesters such as poly(epsilon-caprolactone) (PCL) and poly(1,3-propylene adipate) (PPA). Exhibits some activity on poly(lactic acid) (PLA). Can bind but not hydrolyze poly(hydroxybutyrate) (PHB). The chain is Cutinase from Kineococcus radiotolerans (strain ATCC BAA-149 / DSM 14245 / SRS30216).